The following is a 292-amino-acid chain: Phosphoribosylglycinamide formyltransferase, chloroplastic (292 aa).

The N-terminal 65 residues, 1 to 65 (MESRVLFSSQ…KAASSTPQIV (65 aa)), are a transit peptide targeting the chloroplast. A N(1)-(5-phospho-beta-D-ribosyl)glycinamide-binding site is contributed by 88–90 (GSN). Residues 167-170 (LKLI) and N184 each bind (6R)-10-formyltetrahydrofolate. H186 serves as the catalytic Proton donor. Residue D227 participates in (6R)-10-formyltetrahydrofolate binding. E256 is a N(1)-(5-phospho-beta-D-ribosyl)glycinamide binding site.

It belongs to the GART family.

It is found in the plastid. The protein resides in the chloroplast. The catalysed reaction is N(1)-(5-phospho-beta-D-ribosyl)glycinamide + (6R)-10-formyltetrahydrofolate = N(2)-formyl-N(1)-(5-phospho-beta-D-ribosyl)glycinamide + (6S)-5,6,7,8-tetrahydrofolate + H(+). It participates in purine metabolism; IMP biosynthesis via de novo pathway; N(2)-formyl-N(1)-(5-phospho-D-ribosyl)glycinamide from N(1)-(5-phospho-D-ribosyl)glycinamide (10-formyl THF route): step 1/1. The chain is Phosphoribosylglycinamide formyltransferase, chloroplastic (PUR3) from Arabidopsis thaliana (Mouse-ear cress).